The chain runs to 172 residues: Small ribosomal subunit protein uS5c (172 aa).

The 64-residue stretch at 15–78 (WEEKVVQVKR…TDAKKHIINV (64 aa)) folds into the S5 DRBM domain.

This sequence belongs to the universal ribosomal protein uS5 family. In terms of assembly, part of the 30S ribosomal subunit. Contacts protein S4.

It is found in the plastid. It localises to the chloroplast. With S4 and S12 plays an important role in translational accuracy. The protein is Small ribosomal subunit protein uS5c (rps5) of Gracilaria tenuistipitata var. liui (Red alga).